Here is a 507-residue protein sequence, read N- to C-terminus: DNA nucleotidylexotransferase (507 aa).

The Nuclear localization signal signature appears at 11–17 (PLRKKAK). A BRCT domain is found at 27-124 (QHNVKFKEIV…RPVEIQNRHL (98 aa)). Positions 254 to 258 (VGLKT) are involved in DNA binding. A 2'-deoxyribonucleoside 5'-triphosphate contacts are provided by residues 329–334 (GFRRGK) and 338–341 (HDVD). 3 residues coordinate Mg(2+): D339, D341, and D431. 446-447 (GW) serves as a coordination point for a 2'-deoxyribonucleoside 5'-triphosphate.

It belongs to the DNA polymerase type-X family. Mg(2+) is required as a cofactor. As to expression, found in the thymus and not in the spleen, kidney, intestine, or liver.

Its subcellular location is the nucleus. It catalyses the reaction DNA(n) + a 2'-deoxyribonucleoside 5'-triphosphate = DNA(n+1) + diphosphate. In terms of biological role, template-independent DNA polymerase which catalyzes the random addition of deoxynucleoside 5'-triphosphate to the 3'-end of a DNA initiator. One of the in vivo functions of this enzyme is the addition of nucleotides at the junction (N region) of rearranged Ig heavy chain and T-cell receptor gene segments during the maturation of B- and T-cells. The polypeptide is DNA nucleotidylexotransferase (dntt) (Xenopus laevis (African clawed frog)).